The primary structure comprises 107 residues: Iron-binding protein IscA (107 aa).

Fe cation is bound by residues Cys-35, Cys-99, and Cys-101.

Belongs to the HesB/IscA family. In terms of assembly, homodimer; may form tetramers and higher multimers. Fe cation serves as cofactor.

Is able to transfer iron-sulfur clusters to apo-ferredoxin. Multiple cycles of [2Fe2S] cluster formation and transfer are observed, suggesting that IscA acts catalytically. Recruits intracellular free iron so as to provide iron for the assembly of transient iron-sulfur cluster in IscU in the presence of IscS, L-cysteine and the thioredoxin reductase system TrxA/TrxB. The chain is Iron-binding protein IscA from Yersinia enterocolitica serotype O:8 / biotype 1B (strain NCTC 13174 / 8081).